The primary structure comprises 122 residues: Large ribosomal subunit protein uL14 (122 aa).

Belongs to the universal ribosomal protein uL14 family. In terms of assembly, part of the 50S ribosomal subunit. Forms a cluster with proteins L3 and L19. In the 70S ribosome, L14 and L19 interact and together make contacts with the 16S rRNA in bridges B5 and B8.

Functionally, binds to 23S rRNA. Forms part of two intersubunit bridges in the 70S ribosome. In Mycolicibacterium gilvum (strain PYR-GCK) (Mycobacterium gilvum (strain PYR-GCK)), this protein is Large ribosomal subunit protein uL14.